We begin with the raw amino-acid sequence, 549 residues long: Undecaprenyl phosphate-alpha-4-amino-4-deoxy-L-arabinose arabinosyl transferase (549 aa).

Transmembrane regions (helical) follow at residues 9–29 (LLLIAFGLFYLVPLSNHGLWI), 80–100 (LFGVRIASVVATALSVLLAYL), 112–132 (SLACALLYASFGLIAGQSGYA), 133–153 (NLDPQFTFWVNLSLVALWHAL), 176–196 (FLTKGFLAWLLPVLVALPYML), 204–224 (LLGYGALAVLAALLVCLPWAL), 256–276 (PWWFYLPLLAVSCLPWSGLLP), 288–308 (QAPVVFLALWLLLPLAFFSLS), 312–332 (LPTYIMPCLLPLALLMGHALV), 346–366 (NGLLNLGLALLALAALAYLQL), 376–396 (FELFLVLLVIGAWAAAGLAQW), and 402–422 (AWAAPLLASWVLIALLPAAMP).

This sequence belongs to the glycosyltransferase 83 family.

It localises to the cell inner membrane. It carries out the reaction 4-amino-4-deoxy-alpha-L-arabinopyranosyl di-trans,octa-cis-undecaprenyl phosphate + lipid IVA = lipid IIA + di-trans,octa-cis-undecaprenyl phosphate.. It participates in lipopolysaccharide metabolism; 4-amino-4-deoxy-beta-L-arabinose-lipid A biosynthesis. Functionally, catalyzes the transfer of the L-Ara4N moiety of the glycolipid undecaprenyl phosphate-alpha-L-Ara4N to lipid A. The modified arabinose is attached to lipid A and is required for resistance to polymyxin and cationic antimicrobial peptides. In Pseudomonas aeruginosa (strain LESB58), this protein is Undecaprenyl phosphate-alpha-4-amino-4-deoxy-L-arabinose arabinosyl transferase.